Consider the following 803-residue polypeptide: Carbon monoxide dehydrogenase large chain (803 aa).

A 4-hydroxyarginine modification is found at arginine 384. Cysteine 385 lines the Cu(+) pocket. Position 757 (glutamate 757) interacts with Mo-molybdopterin cytosine dinucleotide.

In terms of assembly, dimer of heterotrimers. Each heterotrimer consists of a large, a medium and a small subunit. Requires Cu(+) as cofactor. Mo-molybdopterin cytosine dinucleotide is required as a cofactor.

The enzyme catalyses CO + a quinone + H2O = a quinol + CO2. Its function is as follows. Catalyzes the oxidation of carbon monoxide to carbon dioxide. This chain is Carbon monoxide dehydrogenase large chain (cutL), found in Hydrogenophaga pseudoflava (Pseudomonas carboxydoflava).